A 293-amino-acid polypeptide reads, in one-letter code: Ribosomal protein L11 methyltransferase (293 aa).

Residues Thr-145, Gly-166, Asp-188, and Asn-230 each coordinate S-adenosyl-L-methionine.

Belongs to the methyltransferase superfamily. PrmA family.

It localises to the cytoplasm. The enzyme catalyses L-lysyl-[protein] + 3 S-adenosyl-L-methionine = N(6),N(6),N(6)-trimethyl-L-lysyl-[protein] + 3 S-adenosyl-L-homocysteine + 3 H(+). In terms of biological role, methylates ribosomal protein L11. This is Ribosomal protein L11 methyltransferase from Shewanella putrefaciens (strain CN-32 / ATCC BAA-453).